The chain runs to 337 residues: Putative 2-aminoethylphosphonate-binding periplasmic protein (337 aa).

The signal sequence occupies residues 1-21 (MKLSRLALLSVFALASAPSWA).

Belongs to the bacterial solute-binding protein 1 family.

Its subcellular location is the periplasm. Its function is as follows. Probably part of the PhnSTUV complex (TC 3.A.1.11.5) involved in 2-aminoethylphosphonate import. The sequence is that of Putative 2-aminoethylphosphonate-binding periplasmic protein (phnS) from Salmonella typhimurium (strain LT2 / SGSC1412 / ATCC 700720).